Here is a 259-residue protein sequence, read N- to C-terminus: Probable ABC transporter permease protein RBE_1340 (259 aa).

5 helical membrane passes run isoleucine 25–isoleucine 45, leucine 49–valine 69, valine 148–methionine 168, proline 195–isoleucine 215, and alanine 237–phenylalanine 257.

The protein belongs to the MlaE permease family.

It localises to the cell inner membrane. Functionally, could be part of an ABC transporter complex. In Rickettsia bellii (strain RML369-C), this protein is Probable ABC transporter permease protein RBE_1340.